Reading from the N-terminus, the 355-residue chain is Syntaxin-5 (355 aa).

Over 1–333 (MIPRKRYGSK…KYFQSVTSNR (333 aa)) the chain is Cytoplasmic. The IxM motif; signal for cargo packaging into COPII-coated vesicles motif lies at 245-247 (IDM). The t-SNARE coiled-coil homology domain occupies 263–325 (DSYIQSRADT…EAAHSEILKY (63 aa)). Positions 287–318 (FQQLAHMVKEQEETIQRIDENVLGAQLDVEAA) form a coiled coil. The chain crosses the membrane as a helical; Anchor for type IV membrane protein span at residues 334 to 354 (WLMVKIFLILIVFFIIFVVFL). Position 355 (A355) is a topological domain, vesicular.

It belongs to the syntaxin family. Part of a ternary complex containing STX5A, NSFL1C and VCP. Part of a unique SNARE complex composed of the Golgi SNAREs GOSR1, GOSR2 and YKT6. This complex also includes VTI1A. Component of a SNARE complex consisting of STX5, YKT6, GOSR1 and BET1L. Interacts with BET1L. Interacts with BET1. Interacts with COG4. Interacts with GM130/GOLGA2. Interacts (via IxM motif) with SEC24C and SEC24D; mediates STX5 packaging into COPII-coated vesicles. Interacts with VLDLR; this interaction mediates VLDLR translocation from the endoplasmic reticulum to the plasma membrane. Expressed in the brain, heart, spleen, lung, liver, kidney and testis.

It localises to the endoplasmic reticulum-Golgi intermediate compartment membrane. It is found in the golgi apparatus membrane. Its function is as follows. Mediates endoplasmic reticulum to Golgi transport. Together with p115/USO1 and GM130/GOLGA2, involved in vesicle tethering and fusion at the cis-Golgi membrane to maintain the stacked and inter-connected structure of the Golgi apparatus. Required for Golgi to endoplasmic reticulum retrogade transport, and for intra-Golgi transport. The protein is Syntaxin-5 (Stx5) of Rattus norvegicus (Rat).